The following is a 1030-amino-acid chain: ATPase MORC2A (1030 aa).

At Ala2 the chain carries N-acetylalanine. ATP contacts are provided by residues Asn39, 87 to 89, and 99 to 105; these read SAK and QYGNGLK. Asn39 is a binding site for Mg(2+). Positions 285–362 form a coiled coil; the sequence is KTRAEQEVKK…KDAKQRALKE (78 aa). Lys427 is an ATP binding site. Residues 490–544 form a CW-type zinc finger; the sequence is AMEIPTTIQCDLCLKWRTLPFQLSSVETDYPDTWVCSMNPDPEQDRCEASEQKQK. Zn(2+) contacts are provided by Cys499, Cys502, Cys525, and Cys536. A disordered region spans residues 530 to 791; the sequence is DPEQDRCEAS…HPAELRKAQK (262 aa). 2 stretches are compositionally biased toward basic and acidic residues: residues 532-543 and 550-577; these read EQDRCEASEQKQ and LKKD…KLEA. The stretch at 555–583 forms a coiled coil; it reads KTQEEKQKQLTEKIRQQQEKLEALQKTTP. At Thr582 the chain carries Phosphothreonine. At Ser614 the chain carries Phosphoserine. Over residues 629 to 646 the composition is skewed to polar residues; it reads PSIQTPRPSTQLRKTSVI. Glycyl lysine isopeptide (Lys-Gly) (interchain with G-Cter in SUMO2) cross-links involve residues Lys650 and Lys702. Low complexity predominate over residues 693–702; it reads PPLSLIPSSK. Ser703 is modified (phosphoserine). A Glycyl lysine isopeptide (Lys-Gly) (interchain with G-Cter in SUMO2) cross-link involves residue Lys714. Ser728 carries the phosphoserine modification. Position 731 is a phosphothreonine (Thr731). 2 positions are modified to phosphoserine: Ser737 and Ser741. The stretch at 738-775 forms a coiled coil; it reads LAVSDEEEAEEEAEKRRERCKRGKLAVKEEKKEANELS. Residues 763-772 are compositionally biased toward basic and acidic residues; that stretch reads AVKEEKKEAN. A Glycyl lysine isopeptide (Lys-Gly) (interchain with G-Cter in SUMO2) cross-link involves residue Lys765. Residues Ser775 and Ser777 each carry the phosphoserine modification. The span at 779–791 shows a compositional bias: basic and acidic residues; that stretch reads GEDHPAELRKAQK. Lys817 participates in a covalent cross-link: Glycyl lysine isopeptide (Lys-Gly) (interchain with G-Cter in SUMO2). Residue Thr834 is modified to Phosphothreonine. Basic and acidic residues predominate over residues 837–849; it reads DRWVEKGSEDVRL. 2 disordered regions span residues 837-874 and 882-901; these read DRWV…EAMV and PEPS…ATSP. Phosphoserine occurs at positions 854 and 859. Residues 856 to 865 are compositionally biased toward polar residues; that stretch reads EHQSPDTQQE. Lys930 is covalently cross-linked (Glycyl lysine isopeptide (Lys-Gly) (interchain with G-Cter in SUMO2)). Residues 966 to 1011 are a coiled coil; sequence RADSRAKASEESLRTSEKKLRETEEKLQKLRTNIVALLQKVQEDID.

As to quaternary structure, homodimerizes upon ATP-binding and dissociate upon ATP hydrolysis; homodimerization is required for gene silencing. Binds histone H3 independently of the methylation status at 'Lys-9'. Interacts with HDAC4. Interacts with FAM208A/TASOR and MPHOSPH8; the interactions associate MORC2 with the HUSH complex which recruits MORC2 to heterochromatic loci. Interacts with Morc2b. In terms of processing, phosphorylated by PAK1 at Ser-737 upon DNA damage. Phosphorylation is required for ATPase activity and recruitment to damaged chromatin. In terms of tissue distribution, expressed in the axons and Schwann cells of peripheral nerves. Expressed in testes.

Its subcellular location is the nucleus. It localises to the cytoplasm. The protein localises to the cytosol. The protein resides in the chromosome. It is found in the nucleus matrix. The enzyme catalyses ATP + H2O = ADP + phosphate + H(+). ATPase activity is dependent of phosphorylation by PAK1 and presence of DNA. Essential for epigenetic silencing by the HUSH complex. Recruited by HUSH to target site in heterochromatin, the ATPase activity and homodimerization are critical for HUSH-mediated silencing. Represses germ cell-related genes and L1 retrotransposons in collaboration with SETDB1 and the HUSH complex, the silencing is dependent of repressive epigenetic modifications, such as H3K9me3 mark. Silencing events often occur within introns of transcriptionally active genes, and lead to the down-regulation of host gene expression. During DNA damage response, regulates chromatin remodeling through ATP hydrolysis. During DNA damage response, may regulate chromatin remodeling through ATP hydrolysis. This chain is ATPase MORC2A, found in Mus musculus (Mouse).